A 308-amino-acid polypeptide reads, in one-letter code: Protein Bel-1 (308 aa).

The DNA-binding element occupies 94-203; that stretch reads SKSTCKRLIL…KGTRLPKRRC (110 aa). The segment at 200–242 is disordered; the sequence is KRRCNPSRRYETFREHPPTRKRRSKEGIPTDQQPSTSNGDPMA. Positions 207–217 are enriched in basic and acidic residues; it reads RRYETFREHPP. Positions 217–226 match the Nuclear localization signal motif; the sequence is PTRKRRSKEG. The transactivation domain stretch occupies residues 228–304; the sequence is PTDQQPSTSN…PLGSSEDQLL (77 aa). Polar residues predominate over residues 229-238; the sequence is TDQQPSTSNG.

In terms of assembly, homodimer or homomultimer. Forms complexes with the host nuclear factors NFIA, NFIB, NFIC or NFIX.

It is found in the host nucleus. Its function is as follows. Transcriptional transactivator that activates the viral internal promoter (IP), thereby enhancing its own expression. This transactivation is repressed by nuclear factor I. Also transactivates the long terminal repeat (LTR) promoter, thereby inducing structural gene expression, initiating the late phase of infection. It is therefore a key regulator of viral gene expression. It directly binds to and activates DNA target sites of viral promoters and those of distinct cellular genes. Required for viral replication. This Simian foamy virus type 1 (SFVmac) protein is Protein Bel-1 (bel1).